The chain runs to 586 residues: Mitogen-activated protein kinase 15 (586 aa).

The region spanning tyrosine 14 to valine 305 is the Protein kinase domain. ATP-binding positions include leucine 20–valine 28 and lysine 43. The active-site Proton acceptor is the aspartate 138. 2 disordered regions span residues glutamine 354 to proline 506 and asparagine 520 to arginine 539. Over residues proline 382–glutamine 393 the composition is skewed to pro residues. A compositionally biased stretch (low complexity) spans proline 400–glutamine 414. Residues lysine 415–glycine 439 are compositionally biased toward polar residues. Positions alanine 452–glutamine 463 are enriched in low complexity. Residues glutamate 464–serine 473 show a composition bias toward basic and acidic residues. Residues phenylalanine 484 to alanine 498 are compositionally biased toward polar residues.

Interacts with dvl2.

The protein localises to the cytoplasm. Its subcellular location is the cytoskeleton. The protein resides in the cilium basal body. It localises to the cell projection. It is found in the cilium. The protein localises to the cell junction. The catalysed reaction is L-seryl-[protein] + ATP = O-phospho-L-seryl-[protein] + ADP + H(+). The enzyme catalyses L-threonyl-[protein] + ATP = O-phospho-L-threonyl-[protein] + ADP + H(+). Functionally, atypical MAPK protein that regulates ciliogenesis by phosphorylating rcsd1 through its binding with dvl2. This is Mitogen-activated protein kinase 15 from Xenopus laevis (African clawed frog).